Consider the following 1156-residue polypeptide: Protein hu-li tai shao (1156 aa).

The disordered stretch occupies residues M1–E36. The span at N22–E36 shows a compositional bias: basic and acidic residues. At S478 the chain carries Phosphoserine. Phosphothreonine occurs at positions 480 and 498. The residue at position 603 (S603) is a Phosphoserine. Position 608 is a phosphotyrosine (Y608). Phosphothreonine is present on residues T609 and T611. S614 carries the phosphoserine modification. Y627 bears the Phosphotyrosine mark. The residue at position 630 (S630) is a Phosphoserine. The disordered stretch occupies residues F897–I956. Residues L904 to F929 show a composition bias toward basic and acidic residues.

Belongs to the aldolase class II family. Adducin subfamily. As to expression, isoform C is expressed in nurse cells. Isoform A is produced in the nurse cell but transported into the oocyte at stage 1, localizes to the oocyte cortex at stage 8 and to the anterior pole from day 9 onwards. Isoform B is expressed in the somatic follicle cells that surround the germline.

It is found in the cytoplasm. The protein localises to the cytoskeleton. The protein resides in the cell membrane. In terms of biological role, required for assembling actin at ring canals in developing egg chambers. Probably interacts with other developmental proteins involved in nurse cell/oocyte transport through the ring canals. Important for normal neuromotor function. The chain is Protein hu-li tai shao (hts) from Drosophila melanogaster (Fruit fly).